The following is a 160-amino-acid chain: SsrA-binding protein (160 aa).

This sequence belongs to the SmpB family.

It is found in the cytoplasm. Required for rescue of stalled ribosomes mediated by trans-translation. Binds to transfer-messenger RNA (tmRNA), required for stable association of tmRNA with ribosomes. tmRNA and SmpB together mimic tRNA shape, replacing the anticodon stem-loop with SmpB. tmRNA is encoded by the ssrA gene; the 2 termini fold to resemble tRNA(Ala) and it encodes a 'tag peptide', a short internal open reading frame. During trans-translation Ala-aminoacylated tmRNA acts like a tRNA, entering the A-site of stalled ribosomes, displacing the stalled mRNA. The ribosome then switches to translate the ORF on the tmRNA; the nascent peptide is terminated with the 'tag peptide' encoded by the tmRNA and targeted for degradation. The ribosome is freed to recommence translation, which seems to be the essential function of trans-translation. The sequence is that of SsrA-binding protein from Mycobacterium bovis (strain ATCC BAA-935 / AF2122/97).